The sequence spans 246 residues: Ribonuclease PH (246 aa).

Phosphate contacts are provided by residues Arg86 and 124 to 126 (GTR).

The protein belongs to the RNase PH family. In terms of assembly, homohexameric ring arranged as a trimer of dimers.

It catalyses the reaction tRNA(n+1) + phosphate = tRNA(n) + a ribonucleoside 5'-diphosphate. In terms of biological role, phosphorolytic 3'-5' exoribonuclease that plays an important role in tRNA 3'-end maturation. Removes nucleotide residues following the 3'-CCA terminus of tRNAs; can also add nucleotides to the ends of RNA molecules by using nucleoside diphosphates as substrates, but this may not be physiologically important. Probably plays a role in initiation of 16S rRNA degradation (leading to ribosome degradation) during starvation. The protein is Ribonuclease PH of Bacillus licheniformis (strain ATCC 14580 / DSM 13 / JCM 2505 / CCUG 7422 / NBRC 12200 / NCIMB 9375 / NCTC 10341 / NRRL NRS-1264 / Gibson 46).